The primary structure comprises 628 residues: Monoterpene synthase like 2, chloroplastic (628 aa).

Residues aspartate 379, aspartate 383, and aspartate 531 each coordinate Mg(2+). Positions 379–383 match the DDXXD motif motif; the sequence is DDIYD.

Belongs to the terpene synthase family. Tpsd subfamily. Requires Mg(2+) as cofactor. It depends on Mn(2+) as a cofactor.

The protein localises to the plastid. Its subcellular location is the chloroplast. It participates in terpene metabolism; oleoresin biosynthesis. It functions in the pathway secondary metabolite biosynthesis; terpenoid biosynthesis. Its function is as follows. Monoterpene synthase (TPS) involved in the biosynthesis of monoterpene natural products included in conifer oleoresin secretions and volatile emissions; these compounds contribute to biotic and abiotic stress defense against herbivores and pathogens. In Pinus banksiana (Jack pine), this protein is Monoterpene synthase like 2, chloroplastic.